The sequence spans 291 residues: Small ribosomal subunit protein uS2 (291 aa).

The tract at residues 235–291 (NLQEDEESGDSGVDPYQDREEEITDYSNYTPKDEASGDDEDEEDNSLVNDEDLYDDK) is disordered. The segment covering 270 to 291 (SGDDEDEEDNSLVNDEDLYDDK) has biased composition (acidic residues).

The protein belongs to the universal ribosomal protein uS2 family.

This Treponema denticola (strain ATCC 35405 / DSM 14222 / CIP 103919 / JCM 8153 / KCTC 15104) protein is Small ribosomal subunit protein uS2.